A 267-amino-acid chain; its full sequence is Imidazole glycerol phosphate synthase subunit HisF (267 aa).

Catalysis depends on residues Asp21 and Asp140.

The protein belongs to the HisA/HisF family. Heterodimer of HisH and HisF.

It is found in the cytoplasm. The enzyme catalyses 5-[(5-phospho-1-deoxy-D-ribulos-1-ylimino)methylamino]-1-(5-phospho-beta-D-ribosyl)imidazole-4-carboxamide + L-glutamine = D-erythro-1-(imidazol-4-yl)glycerol 3-phosphate + 5-amino-1-(5-phospho-beta-D-ribosyl)imidazole-4-carboxamide + L-glutamate + H(+). The protein operates within amino-acid biosynthesis; L-histidine biosynthesis; L-histidine from 5-phospho-alpha-D-ribose 1-diphosphate: step 5/9. IGPS catalyzes the conversion of PRFAR and glutamine to IGP, AICAR and glutamate. The HisF subunit catalyzes the cyclization activity that produces IGP and AICAR from PRFAR using the ammonia provided by the HisH subunit. In Bordetella avium (strain 197N), this protein is Imidazole glycerol phosphate synthase subunit HisF.